The chain runs to 337 residues: Thymidylate synthase (337 aa).

Residues arginine 74 and 199-200 contribute to the dUMP site; that span reads RR. Residue cysteine 219 is the Nucleophile of the active site. Residues 239–242, asparagine 250, and 280–282 each bind dUMP; these read RSGD and HIY. Aspartate 242 contacts (6R)-5,10-methylene-5,6,7,8-tetrahydrofolate. Residue alanine 336 participates in (6R)-5,10-methylene-5,6,7,8-tetrahydrofolate binding.

It belongs to the thymidylate synthase family. Homodimer.

The enzyme catalyses dUMP + (6R)-5,10-methylene-5,6,7,8-tetrahydrofolate = 7,8-dihydrofolate + dTMP. It participates in pyrimidine metabolism; dTTP biosynthesis. The polypeptide is Thymidylate synthase (70) (Homo sapiens (Human)).